A 282-amino-acid chain; its full sequence is Cell division protein DivIB (282 aa).

The Cytoplasmic portion of the chain corresponds to 1 to 59; sequence MLDDRSAIEHHKYSQRLTELERRSAAAQQRQQKKKPPKMHVGNKIRGIKIKRYVSNGER. The tract at residues 19-41 is disordered; the sequence is ELERRSAAAQQRQQKKKPPKMHV. The span at 31-41 shows a compositional bias: basic residues; that stretch reads QQKKKPPKMHV. The chain crosses the membrane as a helical span at residues 60-80; that stretch reads VLKLVVLFSAILLFMLYIISP. The Extracellular segment spans residues 81–282; the sequence is LSKITTLHVT…YSYDYGSKDK (202 aa). In terms of domain architecture, POTRA spans 82–153; it reads SKITTLHVTG…QSLQISVKEN (72 aa).

It belongs to the FtsQ/DivIB family. DivIB subfamily.

The protein localises to the cell membrane. In terms of biological role, cell division protein that may be involved in stabilizing or promoting the assembly of the division complex. The sequence is that of Cell division protein DivIB from Limosilactobacillus reuteri (strain ATCC 55730 / SD2112) (Lactobacillus reuteri).